A 731-amino-acid chain; its full sequence is Alpha-1,4-glucan:maltose-1-phosphate maltosyltransferase (731 aa).

Basic and acidic residues predominate over residues 1–10 (MEAQHNETEA). Positions 1–31 (MEAQHNETEAAGKPAAKKTTRTRKPRASKQA) are disordered. Residues 15–27 (AAKKTTRTRKPRA) are compositionally biased toward basic residues. Alpha-maltose 1-phosphate-binding residues include K321, Q381, and D416. The Nucleophile role is filled by D451. N452 is a binding site for alpha-maltose 1-phosphate. Residue E480 is the Proton donor of the active site. Alpha-maltose 1-phosphate is bound at residue 590–591 (KF).

It belongs to the glycosyl hydrolase 13 family. GlgE subfamily. As to quaternary structure, homodimer.

The enzyme catalyses alpha-maltose 1-phosphate + [(1-&gt;4)-alpha-D-glucosyl](n) = [(1-&gt;4)-alpha-D-glucosyl](n+2) + phosphate. Its function is as follows. Maltosyltransferase that uses maltose 1-phosphate (M1P) as the sugar donor to elongate linear or branched alpha-(1-&gt;4)-glucans. Is involved in a branched alpha-glucan biosynthetic pathway from trehalose, together with TreS, Mak and GlgB. The protein is Alpha-1,4-glucan:maltose-1-phosphate maltosyltransferase of Bifidobacterium animalis subsp. lactis (strain Bl-04 / DGCC2908 / RB 4825 / SD5219).